The chain runs to 692 residues: Follicle-stimulating hormone receptor (692 aa).

A signal peptide spans 1-17 (MALLLVSLLAFLGSGSG). Disulfide bonds link C18–C25 and C23–C32. Positions 18-46 (CHHWLCHCSNRVFLCQDSKVTEIPPDLPR) constitute an LRRNT domain. The Extracellular segment spans residues 18–365 (CHHWLCHCSN…EDIMGYNILR (348 aa)). LRR repeat units follow at residues 49-72 (IELRFVLTKLRVIPKGSFSGFGDL), 73-97 (EKIEISQNDVLEVIEADVFSNLPNL), 98-118 (HEIRIEKANNLLYINPEAFQN), 119-143 (LPSLRYLLISNTGIKHLPAFHKIQS), 144-169 (LQKVLLDIQDNINIHIIARNSFMGLS), 170-192 (FESVILWLNKNGIQEIHNCAFNG), 193-216 (TQLDELNLSDNNNLEELPDDVFQG), 217-240 (ASGPVVLDISRTKVYSLPNHGLEN), and 241-259 (LKKLRARSTYRLKKLPSLD). 2 N-linked (GlcNAc...) asparagine glycosylation sites follow: N191 and N199. Intrachain disulfides connect C275–C345, C276–C292, C276–C355, and C292–C337. An N-linked (GlcNAc...) asparagine glycan is attached at N293. The residue at position 334 (Y334) is a Sulfotyrosine. Residues 366 to 386 (VLIWFISILAITGNTTVLVVL) form a helical membrane-spanning segment. Topologically, residues 387–397 (TTSQYKLTVPR) are cytoplasmic. The helical transmembrane segment at 398–420 (FLMCNLAFADLCIGIYLLLIASV) threads the bilayer. Topologically, residues 421–442 (DIHTKSQYHNYAIDWQTGAGCD) are extracellular. An intrachain disulfide couples C441 to C516. The chain crosses the membrane as a helical span at residues 443–464 (AAGFFTVFASELSVYTLAAITL). The Cytoplasmic portion of the chain corresponds to 465-484 (ERWHTITHAMQLECKVQLCH). A helical membrane pass occupies residues 485–507 (AASIMVLGWAFAFAAALFPIFGI). The Extracellular segment spans residues 508-527 (SSYMKVSICLPMDIDSPLSQ). A helical membrane pass occupies residues 528-549 (LYVMALLVLNALAFVVICGCYT). Topologically, residues 550–572 (HIYLTVRNPNIVSSSRDTKIAKR) are cytoplasmic. A helical membrane pass occupies residues 573–596 (MATLIFTDFLCMAPILFFAISASL). The Extracellular segment spans residues 597–607 (KVPLITVSKAK). Residues 608–629 (ILLVLFYPINSCANPFLYAIFT) traverse the membrane as a helical segment. Residues 630-692 (KNFRRDFFVL…LVPLNHSVQN (63 aa)) are Cytoplasmic-facing.

The protein belongs to the G-protein coupled receptor 1 family. FSH/LSH/TSH subfamily. Homotrimer. Functions as a homotrimer binding the FSH hormone heterodimer composed of CGA and FSHB. Interacts with ARRB2. Interacts with APPL2; interaction is independent of follicle stimulating hormone stimulation. In terms of processing, N-glycosylated; indirectly required for FSH-binding, possibly via a conformational change that allows high affinity binding of hormone. Post-translationally, sulfated.

Its subcellular location is the cell membrane. Its function is as follows. G protein-coupled receptor for follitropin, the follicle-stimulating hormone. Through cAMP production activates the downstream PI3K-AKT and ERK1/ERK2 signaling pathways. The protein is Follicle-stimulating hormone receptor (Fshr) of Mus musculus (Mouse).